The sequence spans 210 residues: MRRNRERMVRQQLMPRGISDEAVLAAMGCVPRHLFVQEALRAQAYEDHPLPIGNGQTISQPFIVAFMSQLLEAKPGMRVLEIGTGSGYQAAVLAEMGLDVYTVERIREIYQTTRDLLRALRYTRIRCRLDDGTLGWPESAPFDRIIVTAGGPEIPVPLVEQLADPGVMVLPVGVSRRSQELVVVRKRDGKLFRSNRGGVSFVDLVGCHGW.

S59 is a catalytic residue.

Belongs to the methyltransferase superfamily. L-isoaspartyl/D-aspartyl protein methyltransferase family.

It is found in the cytoplasm. It catalyses the reaction [protein]-L-isoaspartate + S-adenosyl-L-methionine = [protein]-L-isoaspartate alpha-methyl ester + S-adenosyl-L-homocysteine. Its function is as follows. Catalyzes the methyl esterification of L-isoaspartyl residues in peptides and proteins that result from spontaneous decomposition of normal L-aspartyl and L-asparaginyl residues. It plays a role in the repair and/or degradation of damaged proteins. The polypeptide is Protein-L-isoaspartate O-methyltransferase (Nitratidesulfovibrio vulgaris (strain ATCC 29579 / DSM 644 / CCUG 34227 / NCIMB 8303 / VKM B-1760 / Hildenborough) (Desulfovibrio vulgaris)).